A 141-amino-acid polypeptide reads, in one-letter code: Nucleoside diphosphate kinase (141 aa).

6 residues coordinate ATP: K11, F59, R87, T93, R104, and N114. The Pros-phosphohistidine intermediate role is filled by H117.

The protein belongs to the NDK family. As to quaternary structure, homotetramer. Mg(2+) serves as cofactor.

It localises to the cytoplasm. The enzyme catalyses a 2'-deoxyribonucleoside 5'-diphosphate + ATP = a 2'-deoxyribonucleoside 5'-triphosphate + ADP. The catalysed reaction is a ribonucleoside 5'-diphosphate + ATP = a ribonucleoside 5'-triphosphate + ADP. In terms of biological role, major role in the synthesis of nucleoside triphosphates other than ATP. The ATP gamma phosphate is transferred to the NDP beta phosphate via a ping-pong mechanism, using a phosphorylated active-site intermediate. The sequence is that of Nucleoside diphosphate kinase from Ralstonia nicotianae (strain ATCC BAA-1114 / GMI1000) (Ralstonia solanacearum).